Consider the following 170-residue polypeptide: Acetyl-CoA decarbonylase/synthase complex subunit epsilon 2 (170 aa).

The protein belongs to the CdhB family. Heterotetramer of two alpha and two epsilon subunits. The ACDS complex is made up of alpha, epsilon, beta, gamma and delta subunits with a probable stoichiometry of (alpha(2)epsilon(2))(4)-beta(8)-(gamma(1)delta(1))(8).

It participates in one-carbon metabolism; methanogenesis from acetate. Functionally, part of a complex that catalyzes the reversible cleavage of acetyl-CoA, allowing growth on acetate as sole source of carbon and energy. The alpha-epsilon subcomponent functions as a carbon monoxide dehydrogenase. The precise role of the epsilon subunit is unclear; it may have a stabilizing role within the alpha(2)epsilon(2) component and/or be involved in electron transfer to FAD during a potential FAD-mediated CO oxidation. The chain is Acetyl-CoA decarbonylase/synthase complex subunit epsilon 2 (cdhB2) from Methanosarcina mazei (strain ATCC BAA-159 / DSM 3647 / Goe1 / Go1 / JCM 11833 / OCM 88) (Methanosarcina frisia).